Reading from the N-terminus, the 287-residue chain is Thymidylate synthase (287 aa).

R21 is a dUMP binding site. Residue N51 participates in (6R)-5,10-methylene-5,6,7,8-tetrahydrofolate binding. 150–151 (RR) is a binding site for dUMP. Catalysis depends on C170, which acts as the Nucleophile. Residues 190–193 (RSGD), N201, and 231–233 (HIY) contribute to the dUMP site. (6R)-5,10-methylene-5,6,7,8-tetrahydrofolate is bound at residue D193. A (6R)-5,10-methylene-5,6,7,8-tetrahydrofolate-binding site is contributed by A286.

It belongs to the thymidylate synthase family. Bacterial-type ThyA subfamily. In terms of assembly, homodimer.

The protein resides in the cytoplasm. It carries out the reaction dUMP + (6R)-5,10-methylene-5,6,7,8-tetrahydrofolate = 7,8-dihydrofolate + dTMP. It functions in the pathway pyrimidine metabolism; dTTP biosynthesis. In terms of biological role, catalyzes the reductive methylation of 2'-deoxyuridine-5'-monophosphate (dUMP) to 2'-deoxythymidine-5'-monophosphate (dTMP) while utilizing 5,10-methylenetetrahydrofolate (mTHF) as the methyl donor and reductant in the reaction, yielding dihydrofolate (DHF) as a by-product. This enzymatic reaction provides an intracellular de novo source of dTMP, an essential precursor for DNA biosynthesis. In Mycoplasma genitalium (strain ATCC 33530 / DSM 19775 / NCTC 10195 / G37) (Mycoplasmoides genitalium), this protein is Thymidylate synthase.